Here is a 507-residue protein sequence, read N- to C-terminus: Dolichyl pyrophosphate Man9GlcNAc2 alpha-1,3-glucosyltransferase (507 aa).

The Cytoplasmic portion of the chain corresponds to 1–2; that stretch reads ME. The chain crosses the membrane as a helical span at residues 3–23; it reads SWPWMAVVVLLGLTVRWTVSL. The Lumenal segment spans residues 24 to 114; the sequence is SSYSGAGKPP…SQAHKLFMRA (91 aa). Asparagine 59 is a glycosylation site (N-linked (GlcNAc...) asparagine). The chain crosses the membrane as a helical span at residues 115 to 135; sequence TVLAADLLIYVPAVLLYCYSL. Residues 136-143 lie on the Cytoplasmic side of the membrane; that stretch reads KEISPKRK. A helical membrane pass occupies residues 144-164; the sequence is IASALCILLYPGLILIDYGHF. The Lumenal portion of the chain corresponds to 165-172; that stretch reads QYNSVSLG. Residues 173-193 traverse the membrane as a helical segment; sequence FALWGVLGVSWDWDLLGSLAF. Residues 194–229 lie on the Cytoplasmic side of the membrane; it reads CLALNYKQMELYHSLPFFCFLLGKCFKKGLKGKGLA. A helical transmembrane segment spans residues 230-250; the sequence is LFIRIACTVLASFLLCWLPFL. The Lumenal portion of the chain corresponds to 251 to 297; that stretch reads TEREHALQVVRRLFPVDRGLFEDKVANIWCSVNVFLKIKDTLPRHIQ. The chain crosses the membrane as a helical span at residues 298 to 318; it reads IAISFCFTLLSLLPACIKLTV. Over 319-332 the chain is Cytoplasmic; the sequence is RPSCKGFRFTLVSC. The chain crosses the membrane as a helical span at residues 333-353; it reads ALSFFLFSFQVHEKSILLVSL. Residues 354–361 are Lumenal-facing; it reads PVCLVLTE. A helical membrane pass occupies residues 362–382; sequence IPFMSTWFLLVSTFSMLPLLL. Residues 383–385 lie on the Cytoplasmic side of the membrane; sequence KDE. A helical transmembrane segment spans residues 386–406; that stretch reads LLLPSVVTVMAFVIACGTFFP. The Lumenal portion of the chain corresponds to 407-437; that stretch reads MLENTSEEQLQLKSFAVSVRRHLPGFTFLPR. Residues 438–458 traverse the membrane as a helical segment; the sequence is IMQCLFLSSVITMVLLTILSV. Topologically, residues 459–468 are cytoplasmic; the sequence is TLDPPQKLPD. The helical transmembrane segment at 469–489 threads the bilayer; it reads LFPVLICFVSCVNFVFFLVYF. Residues 490 to 507 are Lumenal-facing; it reads NIVIMWDSKNGRNRKKIE.

The protein belongs to the ALG6/ALG8 glucosyltransferase family.

The protein resides in the endoplasmic reticulum membrane. The catalysed reaction is an alpha-D-Man-(1-&gt;2)-alpha-D-Man-(1-&gt;2)-alpha-D-Man-(1-&gt;3)-[alpha-D-Man-(1-&gt;2)-alpha-D-Man-(1-&gt;3)-[alpha-D-Man-(1-&gt;2)-alpha-D-Man-(1-&gt;6)]-alpha-D-Man-(1-&gt;6)]-beta-D-Man-(1-&gt;4)-beta-D-GlcNAc-(1-&gt;4)-alpha-D-GlcNAc-diphospho-di-trans,poly-cis-dolichol + a di-trans,poly-cis-dolichyl beta-D-glucosyl phosphate = an alpha-D-Glc-(1-&gt;3)-alpha-D-Man-(1-&gt;2)-alpha-D-Man-(1-&gt;2)-alpha-D-Man-(1-&gt;3)-[alpha-D-Man-(1-&gt;2)-alpha-D-Man-(1-&gt;3)-[alpha-D-Man-(1-&gt;2)-alpha-D-Man-(1-&gt;6)]-alpha-D-Man-(1-&gt;6)]-beta-D-Man-(1-&gt;4)-beta-D-GlcNAc-(1-&gt;4)-alpha-D-GlcNAc-diphospho-di-trans,poly-cis-dolichol + a di-trans,poly-cis-dolichyl phosphate + H(+). It participates in protein modification; protein glycosylation. Functionally, dolichyl pyrophosphate Man9GlcNAc2 alpha-1,3-glucosyltransferase that operates in the biosynthetic pathway of dolichol-linked oligosaccharides, the glycan precursors employed in protein asparagine (N)-glycosylation. The assembly of dolichol-linked oligosaccharides begins on the cytosolic side of the endoplasmic reticulum membrane and finishes in its lumen. The sequential addition of sugars to dolichol pyrophosphate produces dolichol-linked oligosaccharides containing fourteen sugars, including two GlcNAcs, nine mannoses and three glucoses. Once assembled, the oligosaccharide is transferred from the lipid to nascent proteins by oligosaccharyltransferases. In the lumen of the endoplasmic reticulum, adds the first glucose residue from dolichyl phosphate glucose (Dol-P-Glc) onto the lipid-linked oligosaccharide intermediate Man(9)GlcNAc(2)-PP-Dol to produce Glc(1)Man(9)GlcNAc(2)-PP-Dol. Glc(1)Man(9)GlcNAc(2)-PP-Dol is a substrate for ALG8, the following enzyme in the biosynthetic pathway. This chain is Dolichyl pyrophosphate Man9GlcNAc2 alpha-1,3-glucosyltransferase, found in Mus musculus (Mouse).